An 895-amino-acid polypeptide reads, in one-letter code: Splicing factor 3B subunit 2 (895 aa).

Positions Met-1–Lys-10 are enriched in basic and acidic residues. Disordered stretches follow at residues Met-1 to Tyr-24, Leu-65 to Gly-136, Ala-197 to Thr-373, and Lys-400 to Lys-453. Lys-10 participates in a covalent cross-link: Glycyl lysine isopeptide (Lys-Gly) (interchain with G-Cter in SUMO2). One can recognise an SAP domain in the interval Tyr-24–Thr-58. Composition is skewed to pro residues over residues Ile-90–Gly-114 and Ala-122–Leu-133. A coiled-coil region spans residues Ala-140–Met-199. Positions Pro-218–Pro-238 are enriched in low complexity. 3 positions are modified to omega-N-methylarginine: Arg-222, Arg-245, and Arg-247. Over residues Ala-241–Gly-254 the composition is skewed to pro residues. Lys-275 is subject to N6-acetyllysine. Residues Leu-277–Glu-286 are compositionally biased toward basic and acidic residues. Residue Lys-280 forms a Glycyl lysine isopeptide (Lys-Gly) (interchain with G-Cter in SUMO2) linkage. Phosphoserine is present on Ser-289. Thr-298 carries the post-translational modification Phosphothreonine. 2 positions are modified to phosphoserine: Ser-307 and Ser-309. A Phosphothreonine modification is found at Thr-311. Ser-317 is modified (phosphoserine). Positions Glu-322–Arg-338 are enriched in basic residues. Basic and acidic residues predominate over residues Ser-347–Gly-359. Phosphoserine occurs at positions 360 and 362. Residues Lys-400 and Lys-412 each participate in a glycyl lysine isopeptide (Lys-Gly) (interchain with G-Cter in SUMO2) cross-link. Basic and acidic residues-rich tracts occupy residues Lys-400 to Glu-414 and Lys-422 to Ser-431. The required for interaction with PRMT9 stretch occupies residues Lys-401–Lys-550. Ser-431, Ser-435, and Ser-436 each carry phosphoserine. A Glycyl lysine isopeptide (Lys-Gly) (interchain with G-Cter in SUMO2) cross-link involves residue Lys-492. Omega-N-methylarginine; by PRMT9; alternate is present on Arg-508. Arg-508 is modified (symmetric dimethylarginine; by PRMT9; alternate). At Arg-515 the chain carries Omega-N-methylarginine. Residue Lys-543 forms a Glycyl lysine isopeptide (Lys-Gly) (interchain with G-Cter in SUMO2) linkage. Positions Ala-691 to Gly-757 are disordered. Residues Glu-712 to Pro-732 are compositionally biased toward acidic residues. A Glycyl lysine isopeptide (Lys-Gly) (interchain with G-Cter in SUMO2) cross-link involves residue Lys-770. At Thr-780 the chain carries Phosphothreonine. Residues Lys-790, Lys-843, and Lys-857 each participate in a glycyl lysine isopeptide (Lys-Gly) (interchain with G-Cter in SUMO2) cross-link. Positions Tyr-844–Ala-869 are enriched in basic and acidic residues. The segment at Tyr-844–Phe-895 is disordered. Ser-861 carries the post-translational modification Phosphoserine.

Component of the 17S U2 SnRNP complex, a ribonucleoprotein complex that contains small nuclear RNA (snRNA) U2 and a number of specific proteins. Part of the SF3B subcomplex of the 17S U2 SnRNP complex. SF3B associates with the splicing subcomplex SF3A and a 12S RNA unit to form the U2 small nuclear ribonucleoproteins complex (U2 snRNP). Within the SF3B complex, interacts directly with SF3B4. Found in a complex with PRMT9, SF3B2 and SF3B4. Interacts (Arg-508-methylated form) with SMN1 (via Tudor domain). Interacts with RBM7. Interacts with ERCC6. Component of the minor spliceosome. Within this complex, interacts with SCNM1 and CRIPT. In terms of assembly, (Microbial infection) Interacts with HIV-1 Vpr. Methylation at Arg-508 by PRMT9 is required for the interaction with SMN1.

The protein localises to the nucleus. It localises to the nucleus speckle. Functionally, component of the 17S U2 SnRNP complex of the spliceosome, a large ribonucleoprotein complex that removes introns from transcribed pre-mRNAs. The 17S U2 SnRNP complex (1) directly participates in early spliceosome assembly and (2) mediates recognition of the intron branch site during pre-mRNA splicing by promoting the selection of the pre-mRNA branch-site adenosine, the nucleophile for the first step of splicing. Within the 17S U2 SnRNP complex, SF3B2 is part of the SF3B subcomplex, which is required for 'A' complex assembly formed by the stable binding of U2 snRNP to the branchpoint sequence in pre-mRNA. Sequence independent binding of SF3A and SF3B subcomplexes upstream of the branch site is essential, it may anchor U2 snRNP to the pre-mRNA. May also be involved in the assembly of the 'E' complex. Also acts as a component of the minor spliceosome, which is involved in the splicing of U12-type introns in pre-mRNAs. In Homo sapiens (Human), this protein is Splicing factor 3B subunit 2 (SF3B2).